The chain runs to 200 residues: NADH-quinone oxidoreductase subunit C (200 aa).

Belongs to the complex I 30 kDa subunit family. NDH-1 is composed of 14 different subunits. Subunits NuoB, C, D, E, F, and G constitute the peripheral sector of the complex.

Its subcellular location is the cell inner membrane. The enzyme catalyses a quinone + NADH + 5 H(+)(in) = a quinol + NAD(+) + 4 H(+)(out). NDH-1 shuttles electrons from NADH, via FMN and iron-sulfur (Fe-S) centers, to quinones in the respiratory chain. The immediate electron acceptor for the enzyme in this species is believed to be ubiquinone. Couples the redox reaction to proton translocation (for every two electrons transferred, four hydrogen ions are translocated across the cytoplasmic membrane), and thus conserves the redox energy in a proton gradient. This is NADH-quinone oxidoreductase subunit C from Chelativorans sp. (strain BNC1).